Reading from the N-terminus, the 599-residue chain is MDKKFIRNFSIIAHIDHGKSTLSDRIIEFTNTLSKREMTNQILDSMDIERERGITIKLNAVQIKYHARDNNEYLIHLIDTPGHVDFTYEVSRSLAACEGAILVVDAAQGIEAQTLSNVYLALENNLEIVPTINKIDLPSADPERVKKEIEDVIGLDTSDIPLISAKTGLNIQDVLEAIIKHVPPPLDANDDAKLQALIFDSFYDSYKGVVCLVRIKQGTIKVGDKIRMMANNKDYIVSELGIRTPKIVNKTELVAGEVGWVAAAIKTVKDINVGDTITHANNPADKPLPGYKKILPMVYCGLYPIDTSQYDDLKEAMAKISLSDAALTYEYETSQALGFGIRCGFLGLLHMDVIRERIAREFNIELILTAPSVIYKIELTNNQEISIDSPAKMPEPTNIKAIKEPFVKLAIITPDNYVGAIMELCQSRRGSYQDLEVIDGTRRRLIYKMPLAEIMYSFFDSLKSITKGYATMDYELIGYQAEKLVKIDIMLNGNKVDALSIIAHRDFAYGKSKIICERLKEVIPKHQFEIPIQASIGSKIIARETIKAVRKDVIAKCYGGDVSRKKKLLEQQKEGKKRLKAIGNVDVPQDAFVKVLSEN.

Residues 4–186 (KFIRNFSIIA…AIIKHVPPPL (183 aa)) form the tr-type G domain. Residues 16–21 (DHGKST) and 133–136 (NKID) contribute to the GTP site.

It belongs to the TRAFAC class translation factor GTPase superfamily. Classic translation factor GTPase family. LepA subfamily.

It is found in the cell membrane. It catalyses the reaction GTP + H2O = GDP + phosphate + H(+). Required for accurate and efficient protein synthesis under certain stress conditions. May act as a fidelity factor of the translation reaction, by catalyzing a one-codon backward translocation of tRNAs on improperly translocated ribosomes. Back-translocation proceeds from a post-translocation (POST) complex to a pre-translocation (PRE) complex, thus giving elongation factor G a second chance to translocate the tRNAs correctly. Binds to ribosomes in a GTP-dependent manner. The polypeptide is Elongation factor 4 (Ureaplasma urealyticum serovar 10 (strain ATCC 33699 / Western)).